The chain runs to 258 residues: Deoxyribose-phosphate aldolase (258 aa).

D101 acts as the Proton donor/acceptor in catalysis. K166 acts as the Schiff-base intermediate with acetaldehyde in catalysis. Catalysis depends on K200, which acts as the Proton donor/acceptor.

Belongs to the DeoC/FbaB aldolase family. DeoC type 2 subfamily.

The protein resides in the cytoplasm. It carries out the reaction 2-deoxy-D-ribose 5-phosphate = D-glyceraldehyde 3-phosphate + acetaldehyde. It functions in the pathway carbohydrate degradation; 2-deoxy-D-ribose 1-phosphate degradation; D-glyceraldehyde 3-phosphate and acetaldehyde from 2-deoxy-alpha-D-ribose 1-phosphate: step 2/2. In terms of biological role, catalyzes a reversible aldol reaction between acetaldehyde and D-glyceraldehyde 3-phosphate to generate 2-deoxy-D-ribose 5-phosphate. The polypeptide is Deoxyribose-phosphate aldolase (Actinobacillus pleuropneumoniae serotype 3 (strain JL03)).